We begin with the raw amino-acid sequence, 665 residues long: PR5-like receptor kinase (665 aa).

The first 24 residues, 1-24, serve as a signal peptide directing secretion; sequence MVEGFSLSLMFLLVSHFFVSGVMS. The Extracellular segment spans residues 25–276; the sequence is RNFTIENKCD…TKQKSSWKLK (252 aa). N-linked (GlcNAc...) asparagine glycans are attached at residues Asn26 and Asn88. Cystine bridges form between Cys33/Cys249, Cys81/Cys91, Cys96/Cys103, Cys153/Cys238, Cys158/Cys221, Cys166/Cys184, Cys188/Cys197, and Cys198/Cys208. An N-linked (GlcNAc...) asparagine glycan is attached at Asn163. N-linked (GlcNAc...) asparagine glycosylation is present at Asn233. Residues 277 to 297 form a helical membrane-spanning segment; the sequence is LIVGVSAALTLMILIVVVIIV. The Cytoplasmic segment spans residues 298 to 665; the sequence is RTKNMRNSEW…DVLQHGSRSS (368 aa). Positions 331–620 constitute a Protein kinase domain; sequence NSFAHVLGKG…ALQVPPNPLL (290 aa). ATP is bound by residues 337 to 345 and Lys360; that span reads LGKGGFGTV. Residue Asp455 is the Proton acceptor of the active site.

It in the N-terminal section; belongs to the thaumatin family. The protein in the C-terminal section; belongs to the protein kinase superfamily. Ser/Thr protein kinase family. Autophosphorylated in vitro. In terms of tissue distribution, expressed in roots. Expressed at low levels in stems.

The protein localises to the membrane. It carries out the reaction L-seryl-[protein] + ATP = O-phospho-L-seryl-[protein] + ADP + H(+). It catalyses the reaction L-threonyl-[protein] + ATP = O-phospho-L-threonyl-[protein] + ADP + H(+). Possesses kinase activity in vitro. The chain is PR5-like receptor kinase from Arabidopsis thaliana (Mouse-ear cress).